The sequence spans 214 residues: Cytochrome c biogenesis ATP-binding export protein CcmA (214 aa).

In terms of domain architecture, ABC transporter spans 12–214; the sequence is LAARALAFSR…TRMLTLEAAA (203 aa). Position 44-51 (44-51) interacts with ATP; sequence GDNGAGKT.

This sequence belongs to the ABC transporter superfamily. CcmA exporter (TC 3.A.1.107) family. As to quaternary structure, the complex is composed of two ATP-binding proteins (CcmA) and two transmembrane proteins (CcmB).

The protein resides in the cell inner membrane. The catalysed reaction is heme b(in) + ATP + H2O = heme b(out) + ADP + phosphate + H(+). In terms of biological role, part of the ABC transporter complex CcmAB involved in the biogenesis of c-type cytochromes; once thought to export heme, this seems not to be the case, but its exact role is uncertain. Responsible for energy coupling to the transport system. The sequence is that of Cytochrome c biogenesis ATP-binding export protein CcmA from Xanthomonas campestris pv. campestris (strain 8004).